Here is a 49-residue protein sequence, read N- to C-terminus: Large ribosomal subunit protein bL33B (49 aa).

It belongs to the bacterial ribosomal protein bL33 family.

In Levilactobacillus brevis (strain ATCC 367 / BCRC 12310 / CIP 105137 / JCM 1170 / LMG 11437 / NCIMB 947 / NCTC 947) (Lactobacillus brevis), this protein is Large ribosomal subunit protein bL33B.